Here is a 260-residue protein sequence, read N- to C-terminus: Ribosomal RNA small subunit methyltransferase A (260 aa).

Positions 16, 18, 43, 64, 86, and 108 each coordinate S-adenosyl-L-methionine.

This sequence belongs to the class I-like SAM-binding methyltransferase superfamily. rRNA adenine N(6)-methyltransferase family. RsmA subfamily.

The protein resides in the cytoplasm. The enzyme catalyses adenosine(1518)/adenosine(1519) in 16S rRNA + 4 S-adenosyl-L-methionine = N(6)-dimethyladenosine(1518)/N(6)-dimethyladenosine(1519) in 16S rRNA + 4 S-adenosyl-L-homocysteine + 4 H(+). In terms of biological role, specifically dimethylates two adjacent adenosines (A1518 and A1519) in the loop of a conserved hairpin near the 3'-end of 16S rRNA in the 30S particle. May play a critical role in biogenesis of 30S subunits. The protein is Ribosomal RNA small subunit methyltransferase A of Buchnera aphidicola subsp. Baizongia pistaciae (strain Bp).